A 766-amino-acid chain; its full sequence is MIWRSRAGAELFSLMALWEWIALSLHCWVLAVAAVSDQHATSPFDWLLSDKGPFHRSQEYTDFVDRSRQGFSTRYKIYREFGRWKVNNLAVERRNFLGSPLPLAPEFFRNIRLLGRRPTLQQITENLIKKYGTHFLLSATLGGEESLTIFVDKRKLSKRAEGSDSTTNSSSVTLETLHQLAASYFIDRDSTLRRLHHIQIASTAIKVTETRTGPLGCSNYDNLDSVSSVLVQSPENKIQLQGLQVLLPDYLQERFVQAALSYIACNSEGEFICKENDCWCHCGPKFPECNCPSMDIQAMEENLLRITETWKAYNSDFEESDEFKLFMKRLPMNYFLNTSTIMHLWTMDSNFQRRYEQLENSMKQLFLKAQKIVHKLFSLSKRCHKQPLISLPRQRTSTYWLTRIQSFLYCNENGLLGSFSEETHSCTCPNDQVVCTAFLPCTVGDASACLTCAPDNRTRCGTCNTGYMLSQGLCKPEVAESTDHYIGFETDLQDLEMKYLLQKTDRRIEVHAIFISNDMRLNSWFDPSWRKRMLLTLKSNKYKSSLVHMILGLSLQICLTKNSTLEPVLAVYVNPFGGSHSESWFMPVNENSFPDWERTKLDLPLQCYNWTLTLGNKWKTFFETVHIYLRSRIKSNGPNGNESIYYEPLEFIDPSRNLGYMKINNIQVFGYSMHFDPEAIRDLILQLDYPYTQGSQDSALLQLLEIRDRVNKLSPPGQRRLDLFSCLLRHRLKLSTSEVVRIQSALQAFNAKLPNTMDYDTTKLCS.

The N-terminal stretch at M1–A33 is a signal peptide. Residues R74–A264 form the MACPF domain. Residues N168, N337, N456, N562, N609, and N641 are each glycosylated (N-linked (GlcNAc...) asparagine).

The protein belongs to the BRINP family. As to expression, strongly expressed in oral keratinocytes compared to the weak expression in tongue squamous cell carcinoma (SCC). Expressed in endothelial and aortic smooth muscle cells. Overexpressed in gonadotropinomas compared to normal pituitarie tissues.

Its subcellular location is the secreted. The protein resides in the mitochondrion. In terms of biological role, inhibits neuronal cell proliferation by negative regulation of the cell cycle transition. Promotes pituitary gonadotrope cell proliferation, migration and invasion, when overexpressed. May play a role in cell pituitary tumor development. This chain is BMP/retinoic acid-inducible neural-specific protein 3 (BRINP3), found in Homo sapiens (Human).